A 359-amino-acid chain; its full sequence is MSKPPSDPPRRAPAAFIYEDEATERRDNGRQGGERRKPESFSEHIVVTPDEDDPFLNPDKDLSAVPVAAPRKRRTSFGKIAAGAFGILLSLAIGLWTDSLIRDLFTRADWLGYAALAVLAVGILAVLALVIRETSGMMRLATVQTIKAEADAAMLETRPVKARAVVARLTALLSANPETAKGRATLKATEGEVIDPPHLMALAERELLAPLDRKARALIVNASKRVSIVTAVSPRAVVDLLYVLYEAVRLIRAMAELYGSRPGTLGMFRLLRDVLAHLAVTGSIAVGDSLVQQVLGHGLASKLSARLGEGVINGLMTARIGIAAMDLCRPLAFRALKRPGIGDFIGDLTPSMSPRGNNP.

The disordered stretch occupies residues 1–48 (MSKPPSDPPRRAPAAFIYEDEATERRDNGRQGGERRKPESFSEHIVVT). A compositionally biased stretch (basic and acidic residues) spans 23-42 (TERRDNGRQGGERRKPESFS). The next 2 helical transmembrane spans lie at 77–97 (FGKI…GLWT) and 111–131 (LGYA…ALVI).

It belongs to the UPF0283 family.

The protein resides in the cell inner membrane. This is UPF0283 membrane protein RL2646 from Rhizobium johnstonii (strain DSM 114642 / LMG 32736 / 3841) (Rhizobium leguminosarum bv. viciae).